The following is a 166-amino-acid chain: 3-isopropylmalate dehydratase small subunit 2 (166 aa).

It belongs to the LeuD family. LeuD type 2 subfamily. As to quaternary structure, heterodimer of LeuC and LeuD.

It catalyses the reaction (2R,3S)-3-isopropylmalate = (2S)-2-isopropylmalate. It participates in amino-acid biosynthesis; L-leucine biosynthesis; L-leucine from 3-methyl-2-oxobutanoate: step 2/4. Its function is as follows. Catalyzes the isomerization between 2-isopropylmalate and 3-isopropylmalate, via the formation of 2-isopropylmaleate. In Thermotoga maritima (strain ATCC 43589 / DSM 3109 / JCM 10099 / NBRC 100826 / MSB8), this protein is 3-isopropylmalate dehydratase small subunit 2 (leuD2).